Consider the following 311-residue polypeptide: Putative mitochondrial transporter UCP3 (311 aa).

Over 1–10 the chain is Mitochondrial intermembrane; that stretch reads MVGLKPSEVP. The helical transmembrane segment at 11–32 threads the bilayer; that stretch reads PTTAVKFLGAGTAACFADLLTF. 3 Solcar repeats span residues 11–105, 114–205, and 214–299; these read PTTA…VKQF, SSIT…IKEK, and DNFP…LKRA. Over 33-76 the chain is Mitochondrial matrix; that stretch reads PLDTAKVRLQIQGENQATQAARRIQYRGVLGTILTMVRTEGPRS. A helical membrane pass occupies residues 77 to 99; the sequence is PYNGLVAGLQRQMSFASIRIGLY. Residues 100–119 are Mitochondrial intermembrane-facing; that stretch reads DSVKQFYTPKGSDHSSITTR. A helical transmembrane segment spans residues 120–136; it reads ILAGCTTGAMAVSCAQP. Topologically, residues 137–182 are mitochondrial matrix; that stretch reads TDVVKVRFQASIHLGAGSNRKYSGTMDAYRTIAREEGVRGLWKGTL. Residues 183–199 form a helical membrane-spanning segment; the sequence is PNITRNAIVNCAEMVTY. The Mitochondrial intermembrane portion of the chain corresponds to 200 to 216; that stretch reads DIIKEKLLDYHLLTDNF. A helical transmembrane segment spans residues 217–236; sequence PCHLISAFGAGFCATVVASP. The Mitochondrial matrix segment spans residues 237–270; the sequence is VDVVKTRYMNSPPGQYCSPLDCMLKMVTQEGPTA. The helical transmembrane segment at 271–293 threads the bilayer; that stretch reads FYKGFTPSFLRLGTWNVVMFVTY. The interval 278–300 is purine nucleotide binding; it reads SFLRLGTWNVVMFVTYEQLKRAL. Topologically, residues 294-311 are mitochondrial intermembrane; that stretch reads EQLKRALMKVQMLRESPF.

The protein belongs to the mitochondrial carrier (TC 2.A.29) family. As to quaternary structure, interacts with HAX1; the interaction is direct and calcium-dependent.

Its subcellular location is the mitochondrion inner membrane. Putative transmembrane transporter that plays a role in mitochondrial metabolism via an as yet unclear mechanism. Originally, this mitochondrial protein was thought to act as a proton transmembrane transporter from the mitochondrial intermembrane space into the matrix, causing proton leaks through the inner mitochondrial membrane, thereby uncoupling mitochondrial membrane potential generation from ATP synthesis. However, this function is controversial and uncoupling may not be the function, or at least not the main function, but rather a consequence of more conventional metabolite transporter activity. The polypeptide is Putative mitochondrial transporter UCP3 (Canis lupus familiaris (Dog)).